Consider the following 426-residue polypeptide: Glutamyl-tRNA reductase (426 aa).

Substrate contacts are provided by residues 50–53 (TCNR), serine 108, 113–115 (EPQ), and glutamine 119. Residue cysteine 51 is the Nucleophile of the active site. 188–193 (GAGEMI) serves as a coordination point for NADP(+).

It belongs to the glutamyl-tRNA reductase family. In terms of assembly, homodimer.

It catalyses the reaction (S)-4-amino-5-oxopentanoate + tRNA(Glu) + NADP(+) = L-glutamyl-tRNA(Glu) + NADPH + H(+). It participates in porphyrin-containing compound metabolism; protoporphyrin-IX biosynthesis; 5-aminolevulinate from L-glutamyl-tRNA(Glu): step 1/2. Its function is as follows. Catalyzes the NADPH-dependent reduction of glutamyl-tRNA(Glu) to glutamate 1-semialdehyde (GSA). The sequence is that of Glutamyl-tRNA reductase from Polaromonas sp. (strain JS666 / ATCC BAA-500).